A 496-amino-acid polypeptide reads, in one-letter code: Probable CtpA-like serine protease (496 aa).

The segment covering 1-16 has biased composition (basic and acidic residues); sequence MDDKQHTTSSDDERAE. The tract at residues 1–27 is disordered; sequence MDDKQHTTSSDDERAENATSNQDQQTN. A compositionally biased stretch (polar residues) spans 17–27; the sequence is NATSNQDQQTN. A helical transmembrane segment spans residues 39–59; sequence FISILIGTIIITAVITVVAYI. In terms of domain architecture, PDZ spans 124–206; the sequence is TKSFNEGVSG…TEVTLTVQRG (83 aa). Catalysis depends on charge relay system residues Ser329, Asp340, and Lys354.

Belongs to the peptidase S41A family.

The protein localises to the cell membrane. This chain is Probable CtpA-like serine protease, found in Staphylococcus aureus (strain MRSA252).